Consider the following 335-residue polypeptide: Large ribosomal subunit protein uL3 (335 aa).

3 disordered regions span residues 1–35 (MPQP…ADDG), 234–256 (IGNL…GQTG), and 312–335 (AVRP…SNQG). Positions 244–256 (RVRSTVPQQGQTG) are enriched in polar residues.

This sequence belongs to the universal ribosomal protein uL3 family. Part of the 50S ribosomal subunit. Forms a cluster with proteins L14 and L24e.

In terms of biological role, one of the primary rRNA binding proteins, it binds directly near the 3'-end of the 23S rRNA, where it nucleates assembly of the 50S subunit. In Halobacterium salinarum (strain ATCC 29341 / DSM 671 / R1), this protein is Large ribosomal subunit protein uL3.